A 484-amino-acid chain; its full sequence is RNA polymerase sigma-54 factor 1 (484 aa).

The H-T-H motif DNA-binding region spans 355–374 (NLKAVAEAIQMHESTVSRVT). The short motif at 444-452 (ARRTVAKYR) is the RPON box element. The segment at 464–484 (RRDNMWSTMNSRASGGTGLDK) is disordered. The span at 468 to 477 (MWSTMNSRAS) shows a compositional bias: polar residues.

It belongs to the sigma-54 factor family.

Sigma factors are initiation factors that promote the attachment of RNA polymerase to specific initiation sites and are then released. This sigma factor is responsible for the expression of the nitrogen fixation genes. In Bradyrhizobium diazoefficiens (strain JCM 10833 / BCRC 13528 / IAM 13628 / NBRC 14792 / USDA 110), this protein is RNA polymerase sigma-54 factor 1 (rpoN1).